A 536-amino-acid polypeptide reads, in one-letter code: Phosphoenolpyruvate carboxykinase (ATP) (536 aa).

Positions 61, 195, and 201 each coordinate substrate. Residues K201, H220, and 236–244 each bind ATP; that span reads GLSGTGKTT. Residues K201 and H220 each coordinate Mn(2+). D257 contacts Mn(2+). ATP-binding residues include E285, R322, and T447. R322 lines the substrate pocket.

Belongs to the phosphoenolpyruvate carboxykinase (ATP) family. The cofactor is Mn(2+).

It localises to the cytoplasm. The catalysed reaction is oxaloacetate + ATP = phosphoenolpyruvate + ADP + CO2. It functions in the pathway carbohydrate biosynthesis; gluconeogenesis. Functionally, involved in the gluconeogenesis. Catalyzes the conversion of oxaloacetate (OAA) to phosphoenolpyruvate (PEP) through direct phosphoryl transfer between the nucleoside triphosphate and OAA. In Rhizobium leguminosarum bv. trifolii (strain WSM2304), this protein is Phosphoenolpyruvate carboxykinase (ATP).